The sequence spans 205 residues: Thymidine kinase (205 aa).

ATP-binding positions include 9 to 16 (SAMNAGKS) and 87 to 90 (DECQ). Catalysis depends on E88, which acts as the Proton acceptor. Zn(2+)-binding residues include C145, C147, C182, and H185.

Belongs to the thymidine kinase family. As to quaternary structure, homotetramer.

The protein localises to the cytoplasm. It carries out the reaction thymidine + ATP = dTMP + ADP + H(+). Its activity is regulated as follows. Allosteric enzyme which is feedback inhibited by dTTP and activated by a number of dNDP and dNTP. Phosphorylates both thymidine and deoxyuridine. The protein is Thymidine kinase of Escherichia coli (strain K12).